The following is a 315-amino-acid chain: Methenyltetrahydromethanopterin cyclohydrolase (315 aa).

Belongs to the MCH family.

It localises to the cytoplasm. The catalysed reaction is 5,10-methenyl-5,6,7,8-tetrahydromethanopterin + H2O = N(5)-formyl-5,6,7,8-tetrahydromethanopterin + H(+). The protein operates within one-carbon metabolism; methanogenesis from CO(2); 5,10-methenyl-5,6,7,8-tetrahydromethanopterin from CO(2): step 3/3. Catalyzes the reversible interconversion of 5-formyl-H(4)MPT to methenyl-H(4)MPT(+). This chain is Methenyltetrahydromethanopterin cyclohydrolase, found in Methanospirillum hungatei JF-1 (strain ATCC 27890 / DSM 864 / NBRC 100397 / JF-1).